A 332-amino-acid polypeptide reads, in one-letter code: Cytoplasmic phosphatidylinositol transfer protein 1 (332 aa).

Phosphoserine occurs at positions 119, 122, 270, and 274. Residues 272-281 (PSSAPSTPLS) show a composition bias toward low complexity. The tract at residues 272 to 332 (PSSAPSTPLS…SEKPCRPKSE (61 aa)) is disordered. At T278 the chain carries Phosphothreonine.

Belongs to the PtdIns transfer protein family. PI transfer class IIB subfamily. In terms of tissue distribution, widely expressed in brain, with expression in the gray matters of pre- and postnatal brains. As to expression, weakly expressed in brain and is rather confined to the embryonic stage.

The protein resides in the cytoplasm. Its subcellular location is the nucleus. It catalyses the reaction a 1,2-diacyl-sn-glycero-3-phospho-(1D-myo-inositol)(in) = a 1,2-diacyl-sn-glycero-3-phospho-(1D-myo-inositol)(out). The enzyme catalyses a 1,2-diacyl-sn-glycero-3-phosphate(in) = a 1,2-diacyl-sn-glycero-3-phosphate(out). Catalyzes the transfer of phosphatidylinositol (PI) and phosphatidic acid (PA) between membranes. Binds PA derived from the phospholipase D signaling pathway and among the cellular PA species, preferably binds to the C16:0/16:1 and C16:1/18:1 PA species. Functionally, specifically binds to phosphatidylinositol but not to other phospholipids and may play a role in the phosphoinositide-mediated signaling in the neural development. The chain is Cytoplasmic phosphatidylinositol transfer protein 1 (Pitpnc1) from Mus musculus (Mouse).